A 171-amino-acid chain; its full sequence is ATP synthase subunit b (171 aa).

The chain crosses the membrane as a helical span at residues 31–51 (FFVVLAIFLVVLAVIGTFVVP).

The protein belongs to the ATPase B chain family. F-type ATPases have 2 components, F(1) - the catalytic core - and F(0) - the membrane proton channel. F(1) has five subunits: alpha(3), beta(3), gamma(1), delta(1), epsilon(1). F(0) has three main subunits: a(1), b(2) and c(10-14). The alpha and beta chains form an alternating ring which encloses part of the gamma chain. F(1) is attached to F(0) by a central stalk formed by the gamma and epsilon chains, while a peripheral stalk is formed by the delta and b chains.

It localises to the cell membrane. Its function is as follows. F(1)F(0) ATP synthase produces ATP from ADP in the presence of a proton or sodium gradient. F-type ATPases consist of two structural domains, F(1) containing the extramembraneous catalytic core and F(0) containing the membrane proton channel, linked together by a central stalk and a peripheral stalk. During catalysis, ATP synthesis in the catalytic domain of F(1) is coupled via a rotary mechanism of the central stalk subunits to proton translocation. In terms of biological role, component of the F(0) channel, it forms part of the peripheral stalk, linking F(1) to F(0). The polypeptide is ATP synthase subunit b (Mycobacterium bovis (strain ATCC BAA-935 / AF2122/97)).